The following is a 602-amino-acid chain: MLRTHLAGSLRAEQAQQTVTLTGWVARRRDHGGVIFIDLRDASGVSQVVFREGAAAEQAHRLRAEYCVKVTGVVEVRPEGNQNFEIPTGAIEVNVTELEVLNESAPLPFQLDDQAGEEARLKYRYLDLRREGPGHAIRLRSKVNAAARAVLAHHEFVEVETPTLTRSTPEGARDFLVPARLQPGSFYALPQSPQLFKQLLMVGGIERYYQIARCYRDEDFRADRQPEFTQLDIEMSFVNQDDVILLAEEVLTSLWKLVGHEIKTPIARMTYAEAMRRYGSDKPDLRFGVELVECAEFFTDTTFRVFQQEYVGAVVMPGGASQPRKQLDAWQEWAKQRGAKGLAYVLVGEDGTLGGPVAKNLTDAERDGLAAHVGAKPGDCIFFAAGATKSSRALLGAARGEIARKQNLIDPDAWAFVWIVDAPLFEPTADATASGDVALGYSAWTAVHHAFTSPKPESIDTFDTDPGSALAYAYDIVCNGNEIGGGSIRIHRKDIQERVFKVMGISHEEAEEKFGFLLDAFAFGAPPHGGIAFGWDRITALLAGVDSIREVIAFPKSGGGVDPLTSAPAPITAQQRKESGVDAKPEPKGDAAAAKPQVSAEK.

Glu-170 lines the L-aspartate pocket. Residues 194-197 (QLFK) form an aspartate region. Residue Arg-216 coordinates L-aspartate. ATP is bound by residues 216 to 218 (RDE) and Gln-225. His-448 serves as a coordination point for L-aspartate. Glu-482 lines the ATP pocket. L-aspartate is bound at residue Arg-489. 534 to 537 (GWDR) is an ATP binding site. A disordered region spans residues 559–602 (GGVDPLTSAPAPITAQQRKESGVDAKPEPKGDAAAAKPQVSAEK). The segment covering 575-589 (QRKESGVDAKPEPKG) has biased composition (basic and acidic residues).

The protein belongs to the class-II aminoacyl-tRNA synthetase family. Type 1 subfamily. As to quaternary structure, homodimer.

It localises to the cytoplasm. The enzyme catalyses tRNA(Asx) + L-aspartate + ATP = L-aspartyl-tRNA(Asx) + AMP + diphosphate. Its function is as follows. Aspartyl-tRNA synthetase with relaxed tRNA specificity since it is able to aspartylate not only its cognate tRNA(Asp) but also tRNA(Asn). Reaction proceeds in two steps: L-aspartate is first activated by ATP to form Asp-AMP and then transferred to the acceptor end of tRNA(Asp/Asn). The protein is Aspartate--tRNA(Asp/Asn) ligase of Rhodococcus opacus (strain B4).